Reading from the N-terminus, the 254-residue chain is MSLDFTVVIPARLRSTRLPGKPLLPIAGKPMVQHVWEQARRSGASRVVIATDDASIVEACRAFGAEVLLTRADHESGTDRLAEVAAQLGLAPDAIVVNVQGDEPLIPPVIIDQVAANLADHPEAGIATLAEPIHEPETIFNPNAVKVVSDKHGLALTFSRAPLPWARDAFAKDRSQLPVGVPYRRHIGMYAYRVGFLQDFVAWGPCWLEQTESLEQLRALWHGVRIHVADAIEAPAVGVDTPEDLERVRRLLEA.

The protein belongs to the KdsB family.

It localises to the cytoplasm. The enzyme catalyses 3-deoxy-alpha-D-manno-oct-2-ulosonate + CTP = CMP-3-deoxy-beta-D-manno-octulosonate + diphosphate. Its pathway is nucleotide-sugar biosynthesis; CMP-3-deoxy-D-manno-octulosonate biosynthesis; CMP-3-deoxy-D-manno-octulosonate from 3-deoxy-D-manno-octulosonate and CTP: step 1/1. It functions in the pathway bacterial outer membrane biogenesis; lipopolysaccharide biosynthesis. Activates KDO (a required 8-carbon sugar) for incorporation into bacterial lipopolysaccharide in Gram-negative bacteria. The sequence is that of 3-deoxy-manno-octulosonate cytidylyltransferase from Pseudomonas entomophila (strain L48).